Consider the following 508-residue polypeptide: Maturase K (508 aa).

It belongs to the intron maturase 2 family. MatK subfamily.

It localises to the plastid. Its subcellular location is the chloroplast. Usually encoded in the trnK tRNA gene intron. Probably assists in splicing its own and other chloroplast group II introns. The protein is Maturase K of Manilkara zapota (Sapodilla plum).